The primary structure comprises 253 residues: MIKAVVFDAYGTLFDVQSVADATERAYPGRGEYITQVWRQKQLEYSWLRALMGRYADFWGVTREALAYTLGTLGLEPDESFLADMAQAYNRLTPYPDAAQCLAELAPLKRAILSNGAPDMLQALVANAGLTDSFDAVISVDAKRVFKPHPDSYALVEEVLGVTPAEVLFVSSNGFDVGGAKNFGFSVARVARLSQEALARELVSGTIAPLTMFKALRMREETYAEAPDFVVPALGDLPRLVRGMAGAHLAPAV.

Asp8 serves as the catalytic Nucleophile. Residues 9–10 (AY), Arg39, and 114–115 (SN) contribute to the an (S)-2-haloacid site. Residues 171–176 (SSNGFD) are important for catalytic activity.

It belongs to the HAD-like hydrolase superfamily. S-2-haloalkanoic acid dehalogenase family. As to quaternary structure, homodimer.

The catalysed reaction is an (S)-2-haloacid + H2O = a (2R)-2-hydroxycarboxylate + a halide anion + H(+). It carries out the reaction (S)-2-chloropropanoate + H2O = (R)-lactate + chloride + H(+). Its function is as follows. Catalyzes the hydrolytic dehalogenation of small (S)-2-haloalkanoic acids to yield the corresponding (R)-2-hydroxyalkanoic acids. Acts on acids of short chain lengths, C(2) to C(4), with inversion of configuration at C-2. Active with 2-halogenated carboxylic acids and converts only the S-isomer (or L-isomer) of 2-chloropropionic acid with inversion of configuration to produce R-lactate (or D-isomer). The chain is (S)-2-haloacid dehalogenase from Xanthobacter autotrophicus.